The chain runs to 75 residues: Small ribosomal subunit protein bS18 (75 aa).

Belongs to the bacterial ribosomal protein bS18 family. As to quaternary structure, part of the 30S ribosomal subunit. Forms a tight heterodimer with protein bS6.

Binds as a heterodimer with protein bS6 to the central domain of the 16S rRNA, where it helps stabilize the platform of the 30S subunit. The protein is Small ribosomal subunit protein bS18 of Saccharophagus degradans (strain 2-40 / ATCC 43961 / DSM 17024).